The chain runs to 63 residues: uncharacterized protein (63 aa).

This is an uncharacterized protein from Orgyia pseudotsugata (Douglas-fir tussock moth).